The following is a 181-amino-acid chain: Sodium/potassium-transporting ATPase subunit beta-1-interacting protein 3 (181 aa).

A run of 4 helical transmembrane segments spans residues 2–22, 35–55, 62–82, and 152–172; these read GCCT…LSAL, APIL…FGTI, IMVY…IICF, and VQIL…SISM.

This sequence belongs to the NKAIN family. In terms of assembly, interacts with ATP1B1. As to expression, detected in the brain only and specifically in neurons. Expressed in multiple regions such as cerebral cortex, thalamus, hippocampus, olfactory bulb and brainstem as well as in cerebellum with low expression in granular cell layer.

The protein localises to the cell membrane. This is Sodium/potassium-transporting ATPase subunit beta-1-interacting protein 3 (Nkain3) from Mus musculus (Mouse).